Consider the following 353-residue polypeptide: 3'-5' exonuclease (353 aa).

The disordered stretch occupies residues 1-119 (MEKYLTKMPI…PSPEKEKPEK (119 aa)). 2 stretches are compositionally biased toward basic and acidic residues: residues 13–30 (KANE…ETPK) and 37–50 (KKDT…KENA). A compositionally biased stretch (basic residues) spans 59 to 70 (TKGRPGRPAAKR). Over residues 71-90 (KNLDTPDVTEKLAMEEENPP) the composition is skewed to basic and acidic residues. A phosphoserine mark is found at Ser103, Ser109, and Ser111. The region spanning 145 to 313 (VLQWVEKQKD…GQVIYRELER (169 aa)) is the 3'-5' exonuclease domain. Residues Asp162, Glu164, and Asp300 each coordinate Mg(2+).

Belongs to the WRNexo family.

It is found in the nucleus. Has exonuclease activity on both single-stranded and duplex templates bearing overhangs, but not blunt ended duplex DNA, and cleaves in a 3'-5' direction. Essential for the formation of DNA replication focal centers. Has an important role in maintaining genome stability. The polypeptide is 3'-5' exonuclease (Drosophila melanogaster (Fruit fly)).